The chain runs to 351 residues: D-alanine--D-alanine ligase (351 aa).

An ATP-grasp domain is found at 135-343 (NQIFLQSGQK…MEEVFSDLIE (209 aa)). 167–222 (LETLGFPQFLKPVEGGSSVSVYKITNREQLKEKLALIFESDSKVMSQSFLTGIEVS) contributes to the ATP binding site. Residues Asp298, Glu310, and Asn312 each contribute to the Mg(2+) site.

This sequence belongs to the D-alanine--D-alanine ligase family. The cofactor is Mg(2+). It depends on Mn(2+) as a cofactor.

It localises to the cytoplasm. The catalysed reaction is 2 D-alanine + ATP = D-alanyl-D-alanine + ADP + phosphate + H(+). The protein operates within cell wall biogenesis; peptidoglycan biosynthesis. Functionally, cell wall formation. The protein is D-alanine--D-alanine ligase of Leptospira interrogans serogroup Icterohaemorrhagiae serovar Lai (strain 56601).